The sequence spans 335 residues: Homeobox protein DBX1 (335 aa).

Disordered stretches follow at residues 58-102 (IPAA…LSPA) and 240-335 (KERE…ITVS). The segment covering 83–95 (GSPGSGSRRGSSP) has biased composition (low complexity). A DNA-binding region (homeobox) is located at residues 181–240 (GMLRRAVFSDVQRKALEKTFQKQKYISKPDRKKLASKLGLKDSQVKIWFQNRRMKWRNSK). The segment covering 299–317 (GPLPASPAHSSSPGKPSDF) has biased composition (low complexity). A compositionally biased stretch (acidic residues) spans 318-335 (SDSDEDEEGEEDEEITVS).

It belongs to the H2.0 homeobox family.

Its subcellular location is the nucleus. Its function is as follows. Could have a role in patterning the central nervous system during embryogenesis. Has a key role in regulating the distinct phenotypic features that distinguish two major classes of ventral interneurons, V0 and V1 neurons. Regulates the transcription factor profile, neurotransmitter phenotype, intraspinal migratory path and axonal trajectory of V0 neurons, features that differentiate them from an adjacent set of V1 neurons. This Mus musculus (Mouse) protein is Homeobox protein DBX1 (Dbx1).